Consider the following 114-residue polypeptide: MPRSVNSVAKRARRKKIMKQAKGFFGRRKNVWTVAKNAVEKAMCYAYRDRKVNKRNFRALWIQRINAGARLEGMSYSQFMGKVKKHNIELNRKVLADLAMNHPVAFKTILNKVK.

It belongs to the bacterial ribosomal protein bL20 family.

Binds directly to 23S ribosomal RNA and is necessary for the in vitro assembly process of the 50S ribosomal subunit. It is not involved in the protein synthesizing functions of that subunit. In Flavobacterium psychrophilum (strain ATCC 49511 / DSM 21280 / CIP 103535 / JIP02/86), this protein is Large ribosomal subunit protein bL20.